The following is a 99-amino-acid chain: Large ribosomal subunit protein eL21 (99 aa).

Belongs to the eukaryotic ribosomal protein eL21 family.

The protein is Large ribosomal subunit protein eL21 of Ignicoccus hospitalis (strain KIN4/I / DSM 18386 / JCM 14125).